Reading from the N-terminus, the 529-residue chain is MFVWTHINKYTSRYINRYILKFTRYESLRLCMLNFTSTIKNENKIYSKKNFNNVLMQNIKITEDEEIICEQFFFSKYNLPYVLKIPFSDLRLIDTCNNNHNPTILIRKDMILLRTGFLSCVIRYNELWLFEPREPLVIKATNLIKQNLKIIYGFKGDMSSGVEIPLNELKDEKCQENVNMYEKNIRNDLYSTYEKNISDDINDAKQKNMCSDINNIWSNHIKIDKKRIISGNYSRLNRNNIWENDREINKKDIFNIKEKKNMNENDDICNKIKIVGKEELNNNIKEDINYLNVENNFYRYKGNISFEFLCLDICMQLSIKEYENYLDTINITLRQKIQLQQKKEENIEINMLTNNLLREMMKIKNKLQKLSNLLNALRSNIEKILKNETDMKNMYLTTLNKISINKIKDYSDLEILLETHLQLTDELSGELENMEEKITHYEELMRLNLDYNRNKFILLNAKISFSTLFCSICAVITSLFGMNLKNFIEHNDYAFFIVSIFITSWSIVGIYFTKNINTLLRFFDKYNVK.

Coiled-coil stretches lie at residues lysine 336 to glutamate 388 and leucine 416 to aspartate 450. Residues phenylalanine 456–isoleucine 476 traverse the membrane as a helical segment. Residues threonine 477 to aspartate 492 lie on the Mitochondrial intermembrane side of the membrane. Residues tyrosine 493–threonine 513 traverse the membrane as a helical segment. The Mitochondrial matrix portion of the chain corresponds to lysine 514–lysine 529.

The protein belongs to the CorA metal ion transporter (MIT) (TC 1.A.35) family.

It localises to the mitochondrion inner membrane. Its function is as follows. Mitochondrial inner membrane magnesium transporter required for mitochondrial magnesium homeostasis. Involved in the development of the sporozoite in the mosquito vector midgut. The sequence is that of Mitochondrial inner membrane magnesium transporter MIT1 from Plasmodium falciparum (isolate 3D7).